The primary structure comprises 195 residues: Thymidine kinase (195 aa).

ATP-binding positions include 9-16 (STMNAGKS) and 87-90 (DEAQ). The active-site Proton acceptor is glutamate 88. Cysteine 145, cysteine 147, cysteine 182, and histidine 185 together coordinate Zn(2+).

It belongs to the thymidine kinase family. In terms of assembly, homotetramer.

The protein localises to the cytoplasm. The catalysed reaction is thymidine + ATP = dTMP + ADP + H(+). The chain is Thymidine kinase from Jannaschia sp. (strain CCS1).